Reading from the N-terminus, the 489-residue chain is Glycogen synthase (489 aa).

Position 20 (Arg20) interacts with ADP-alpha-D-glucose.

The protein belongs to the glycosyltransferase 1 family. Bacterial/plant glycogen synthase subfamily.

The catalysed reaction is [(1-&gt;4)-alpha-D-glucosyl](n) + ADP-alpha-D-glucose = [(1-&gt;4)-alpha-D-glucosyl](n+1) + ADP + H(+). It participates in glycan biosynthesis; glycogen biosynthesis. In terms of biological role, synthesizes alpha-1,4-glucan chains using ADP-glucose. The sequence is that of Glycogen synthase from Chlorobium phaeobacteroides (strain DSM 266 / SMG 266 / 2430).